The following is a 450-amino-acid chain: Protein tweety homolog 1 (450 aa).

Topologically, residues Met-1–Ala-43 are extracellular. The chain crosses the membrane as a helical span at residues Leu-44–Val-64. At Tyr-65–Gly-88 the chain is on the cytoplasmic side. A helical transmembrane segment spans residues Cys-89–Phe-109. The Extracellular portion of the chain corresponds to Tyr-110–Trp-214. Asn-130 is a glycosylation site (N-linked (GlcNAc...) asparagine). The chain crosses the membrane as a helical span at residues Leu-215–Leu-235. Residues Ala-236–Lys-240 are Cytoplasmic-facing. The helical transmembrane segment at Trp-241–Met-261 threads the bilayer. Topologically, residues Gly-262–Glu-390 are extracellular. Intrachain disulfides connect Cys-275–Cys-385 and Cys-303–Cys-370. Residues Asn-284 and Asn-355 are each glycosylated (N-linked (GlcNAc...) asparagine). Residues Gly-391–Cys-411 traverse the membrane as a helical segment. Over Ser-412 to Ile-450 the chain is Cytoplasmic. Residues Asp-428–Ile-450 are disordered. Ser-440 is subject to Phosphoserine.

This sequence belongs to the tweety family. In terms of assembly, homotetramer; disulfide-linked. Homodimer. In terms of processing, N-glycosylated. Contains high-mannose, hybrid and complex oligosaccharides.

It localises to the cell membrane. It catalyses the reaction chloride(in) = chloride(out). The catalysed reaction is L-glutamate(out) = L-glutamate(in). In terms of biological role, calcium-independent, swelling-dependent volume-regulated anion channel (VRAC-swell) which plays a pivotal role in the process of regulatory volume decrease (RVD) in the brain through the efflux of anions like chloride and organic osmolytes like glutamate. The polypeptide is Protein tweety homolog 1 (Ttyh1) (Rattus norvegicus (Rat)).